The sequence spans 192 residues: Putative BTB/POZ domain-containing protein At4g04090 (192 aa).

The 74-residue stretch at V23–E96 folds into the BTB domain.

It functions in the pathway protein modification; protein ubiquitination. Functionally, may act as a substrate-specific adapter of an E3 ubiquitin-protein ligase complex (CUL3-RBX1-BTB) which mediates the ubiquitination and subsequent proteasomal degradation of target proteins. The chain is Putative BTB/POZ domain-containing protein At4g04090 from Arabidopsis thaliana (Mouse-ear cress).